The chain runs to 326 residues: Transposase for insertion sequence element IS4351 (326 aa).

The Integrase catalytic domain maps to 156–317 (IDERPEIVEL…TPNEKFKQII (162 aa)).

This sequence belongs to the transposase IS30 family.

Functionally, required for the transposition of the insertion element. The protein is Transposase for insertion sequence element IS4351 of Bacteroides fragilis.